Here is a 95-residue protein sequence, read N- to C-terminus: RING finger protein Z (95 aa).

The N-myristoyl glycine; by host moiety is linked to residue G2. An RING-type; atypical zinc finger spans residues 38–74 (CKSCWFANKGLIKCSNHYLCLKCLTAMLSRSDYCGIC). Positions 88–91 (PSAP) match the PTAP/PSAP motif motif.

The protein belongs to the arenaviridae Z protein family. Interacts with protein NP; this interaction probably directs the encapsidated genome to budding sites. Interacts (via RING domain) with polymerase L; this interaction inhibits viral transcription and replication, Z partially blocks the product exit tunnel for the releasing nascent RNA product. Interacts with the glycoprotein complex; this interaction plays a role in virion budding. Interacts with host eIF4E; this interaction results in eIF4E reduced affinity for its substrate, the 5'-m7 G cap structure. Interacts (via late-budding domain) with host TSG101; this interaction is essential for budding and release of viral particles. Interacts with host RPLP0; this interaction may serve to load ribosome-like particles inside the virion. Interacts with host PML; this interaction induces PML bodies redistribution in the cytoplasm upon viral infection. Myristoylation is required for the role of RING finger protein Z in assembly and budding.

It localises to the virion. The protein localises to the host cytoplasm. Its subcellular location is the host perinuclear region. The protein resides in the host cell membrane. Plays a crucial role in virion assembly and budding. Expressed late in the virus life cycle, it acts as an inhibitor of viral transcription and RNA synthesis by interacting with the viral polymerase L. Presumably recruits the NP encapsidated genome to cellular membranes at budding sites via direct interaction with NP. Plays critical roles in the final steps of viral release by interacting with host TSG101, a member of the vacuolar protein-sorting pathway and using other cellular host proteins involved in vesicle formation pathway. The budding of the virus progeny occurs after association of protein Z with the viral glycoprotein complex SSP-GP1-GP2 at the cell periphery, step that requires myristoylation of protein Z. Also selectively represses protein production by associating with host eIF4E. In cell-based minigenome assay, has an inhibitory effect on the ribonucleoprotein machinery (vRNP), which is responsible for the replication and transcription of the viral genome. The chain is RING finger protein Z from Bear Canyon mammarenavirus (isolate Mouse/United States/AV A0070039/2000) (BCNV).